The sequence spans 179 residues: Pyridoxal 5'-phosphate synthase subunit PdxT (179 aa).

48–50 (GES) provides a ligand contact to L-glutamine. The Nucleophile role is filled by Cys79. L-glutamine contacts are provided by residues Arg101 and 127 to 128 (IR). Residues His163 and Glu165 each act as charge relay system in the active site.

It belongs to the glutaminase PdxT/SNO family. As to quaternary structure, in the presence of PdxS, forms a dodecamer of heterodimers. Only shows activity in the heterodimer.

It carries out the reaction aldehydo-D-ribose 5-phosphate + D-glyceraldehyde 3-phosphate + L-glutamine = pyridoxal 5'-phosphate + L-glutamate + phosphate + 3 H2O + H(+). It catalyses the reaction L-glutamine + H2O = L-glutamate + NH4(+). It participates in cofactor biosynthesis; pyridoxal 5'-phosphate biosynthesis. Functionally, catalyzes the hydrolysis of glutamine to glutamate and ammonia as part of the biosynthesis of pyridoxal 5'-phosphate. The resulting ammonia molecule is channeled to the active site of PdxS. This Francisella philomiragia subsp. philomiragia (strain ATCC 25017 / CCUG 19701 / FSC 153 / O#319-036) protein is Pyridoxal 5'-phosphate synthase subunit PdxT.